The primary structure comprises 210 residues: Molybdenum cofactor guanylyltransferase (210 aa).

GTP contacts are provided by residues 9–11 (LAG), Lys21, Asp66, and Asp95. Asp95 is a binding site for Mg(2+).

It belongs to the MobA family. In terms of assembly, monomer. Mg(2+) serves as cofactor.

It is found in the cytoplasm. It catalyses the reaction Mo-molybdopterin + GTP + H(+) = Mo-molybdopterin guanine dinucleotide + diphosphate. Its function is as follows. Transfers a GMP moiety from GTP to Mo-molybdopterin (Mo-MPT) cofactor (Moco or molybdenum cofactor) to form Mo-molybdopterin guanine dinucleotide (Mo-MGD) cofactor. This Syntrophotalea carbinolica (strain DSM 2380 / NBRC 103641 / GraBd1) (Pelobacter carbinolicus) protein is Molybdenum cofactor guanylyltransferase.